A 457-amino-acid chain; its full sequence is Bifunctional protein GlmU (457 aa).

Residues 1–227 (MTQLSVVILA…FMEVEGANNR (227 aa)) form a pyrophosphorylase region. UDP-N-acetyl-alpha-D-glucosamine is bound by residues 9–12 (LAAG), K23, Q74, 79–80 (GT), 101–103 (YGD), G138, E152, N167, and N225. Residue D103 coordinates Mg(2+). Mg(2+) is bound at residue N225. The interval 228 to 248 (LQLAALERFYQKTQAEKLLLA) is linker. The segment at 249-457 (GVRLIDPARF…QRPTKKKIAD (209 aa)) is N-acetyltransferase. R331 and K349 together coordinate UDP-N-acetyl-alpha-D-glucosamine. The active-site Proton acceptor is the H361. Y364 and N375 together coordinate UDP-N-acetyl-alpha-D-glucosamine. Acetyl-CoA is bound by residues A378, 384-385 (NY), S403, A421, and R438.

In the N-terminal section; belongs to the N-acetylglucosamine-1-phosphate uridyltransferase family. It in the C-terminal section; belongs to the transferase hexapeptide repeat family. In terms of assembly, homotrimer. It depends on Mg(2+) as a cofactor.

The protein resides in the cytoplasm. The catalysed reaction is alpha-D-glucosamine 1-phosphate + acetyl-CoA = N-acetyl-alpha-D-glucosamine 1-phosphate + CoA + H(+). The enzyme catalyses N-acetyl-alpha-D-glucosamine 1-phosphate + UTP + H(+) = UDP-N-acetyl-alpha-D-glucosamine + diphosphate. It participates in nucleotide-sugar biosynthesis; UDP-N-acetyl-alpha-D-glucosamine biosynthesis; N-acetyl-alpha-D-glucosamine 1-phosphate from alpha-D-glucosamine 6-phosphate (route II): step 2/2. Its pathway is nucleotide-sugar biosynthesis; UDP-N-acetyl-alpha-D-glucosamine biosynthesis; UDP-N-acetyl-alpha-D-glucosamine from N-acetyl-alpha-D-glucosamine 1-phosphate: step 1/1. It functions in the pathway bacterial outer membrane biogenesis; LPS lipid A biosynthesis. Functionally, catalyzes the last two sequential reactions in the de novo biosynthetic pathway for UDP-N-acetylglucosamine (UDP-GlcNAc). The C-terminal domain catalyzes the transfer of acetyl group from acetyl coenzyme A to glucosamine-1-phosphate (GlcN-1-P) to produce N-acetylglucosamine-1-phosphate (GlcNAc-1-P), which is converted into UDP-GlcNAc by the transfer of uridine 5-monophosphate (from uridine 5-triphosphate), a reaction catalyzed by the N-terminal domain. The protein is Bifunctional protein GlmU of Actinobacillus pleuropneumoniae serotype 5b (strain L20).